Consider the following 155-residue polypeptide: Small ribosomal subunit protein uS7 (155 aa).

It belongs to the universal ribosomal protein uS7 family. In terms of assembly, part of the 30S ribosomal subunit. Contacts proteins S9 and S11.

Functionally, one of the primary rRNA binding proteins, it binds directly to 16S rRNA where it nucleates assembly of the head domain of the 30S subunit. Is located at the subunit interface close to the decoding center, probably blocks exit of the E-site tRNA. In Thermosipho africanus (strain TCF52B), this protein is Small ribosomal subunit protein uS7.